Consider the following 293-residue polypeptide: Protein nud-2 (293 aa).

The stretch at 36 to 147 (EIEKMMDSEL…EKIAMLESEL (112 aa)) forms a coiled coil. Residues 239–293 (KSQRVSTGTGAGACINRIVKDLMTKVERLDSILSTIRVSNNSSNNNSSHLTTTRA) form a required for interaction with unc-83 isoform c region.

This sequence belongs to the nudE family. Component of a dynein-regulating complex composed of at least lis-1 and nud-2. Interacts with lis-1; the interaction is direct. Interacts (via C-terminus) with unc-83; the interaction is direct, and is required for recruitment of nud-2 to the nuclear envelope. In terms of tissue distribution, expressed in ventral cord neurons, the pharynx, seam cells of the hypodermis and in vulval muscle cells.

It localises to the nucleus envelope. In terms of biological role, part of a complex with lis-1, which is recruited to the nuclear envelope by unc-83, where, in turn, it recruits dynein to the nuclear surface and regulates nuclear migration in hypodermal precursor cells. Plays a role in GABAergic synaptic vesicle localization in the ventral nerve cord. In Caenorhabditis elegans, this protein is Protein nud-2.